A 927-amino-acid polypeptide reads, in one-letter code: Altered inheritance of mitochondria protein 3 (927 aa).

A compositionally biased stretch (low complexity) spans 22 to 33 (IGTGTKALGKAG). The segment at 22–671 (IGTGTKALGK…AAAPPIESGP (650 aa)) is disordered. The span at 41-60 (QGERRGVPDNEADKAERSSY) shows a compositional bias: basic and acidic residues. 3 stretches are compositionally biased toward low complexity: residues 67 to 93 (NTSA…TSYY), 123 to 193 (HQDQ…QPQP), and 206 to 222 (TQAG…QQYQ). The span at 223–232 (NGHIQQSHPA) shows a compositional bias: polar residues. A compositionally biased stretch (low complexity) spans 233–275 (ETQQPTYQVEQQQQSYSTEPQQQLQQPIFQPQPQSQDPYQQSP). 2 stretches are compositionally biased toward polar residues: residues 290 to 303 (SQLQ…TQVD) and 383 to 395 (ETTL…NVRQ). Composition is skewed to low complexity over residues 401-417 (TRQS…TTST) and 424-440 (SNTA…SSLP). The span at 469–478 (QLTSDGSSRN) shows a compositional bias: polar residues. The segment covering 479–488 (AEPDTLKQEP) has biased composition (basic and acidic residues). A compositionally biased stretch (low complexity) spans 503 to 517 (KNTNSSLSGKGNLNS). A compositionally biased stretch (pro residues) spans 558 to 568 (KPKIGPKPSIS). The segment covering 571 to 593 (PETKGKPIIKSKSEIKAKPDLKP) has biased composition (basic and acidic residues). Over residues 618 to 629 (DSPSNLHVNKSN) the composition is skewed to polar residues.

This sequence belongs to the AIM3 family.

The protein localises to the membrane raft. This is Altered inheritance of mitochondria protein 3 (AIM3) from Debaryomyces hansenii (strain ATCC 36239 / CBS 767 / BCRC 21394 / JCM 1990 / NBRC 0083 / IGC 2968) (Yeast).